The primary structure comprises 330 residues: Catharanthine synthase (330 aa).

The Involved in the stabilization of the negatively charged intermediate by the formation of the oxyanion hole motif lies at 81-83 (HGA). Gly-84 provides a ligand contact to catharanthine. The active-site Proton acceptor is the Ser-173. The active site involves Asp-274. Tyr-305 serves as a coordination point for catharanthine. Residue Tyr-305 is the Proton donor/acceptor of the active site.

It belongs to the 'GDXG' lipolytic enzyme family. In terms of assembly, interacts with dehydroprecondylocarpine acetate synthase (DPAS). Expressed in leaf epidermis.

It is found in the cytoplasm. The protein localises to the cytosol. It localises to the nucleus. It catalyses the reaction dehydrosecodine = catharanthine. Its pathway is alkaloid biosynthesis. In terms of biological role, component of iboga and aspidosperma monoterpenoid indole alkaloids (MIAs, e.g. tabersonine and catharanthine) biosynthesis pathway from 19E-geissoschizine, psychoactive compounds likely to be used in the treatment of opioid dependence. Catalyzes the conversion of dehydrosecodine to catharanthine. This chain is Catharanthine synthase, found in Catharanthus roseus (Madagascar periwinkle).